The following is a 421-amino-acid chain: E3 ubiquitin-protein ligase MARCHF4 (421 aa).

The N-terminal stretch at 1–16 is a signal peptide; that stretch reads MLLAIGVIVWCWGLLS. The interval 60–79 is disordered; the sequence is ELNAEGNATSSATESHSLAN. A compositionally biased stretch (polar residues) spans 65-77; sequence GNATSSATESHSL. The RING-CH-type zinc finger occupies 135–195; it reads DSGVRTPLCR…ELCYYKYQVI (61 aa). Residues Cys143, Cys146, Cys159, Cys161, His169, Cys172, Cys185, and Cys188 each coordinate Zn(2+). Helical transmembrane passes span 218 to 238 and 252 to 272; these read IAAA…LVWS and LFQI…ALIV. Disordered regions lie at residues 319–385 and 401–421; these read PLTH…LPDH and QEPR…VTTV. 2 stretches are compositionally biased toward polar residues: residues 367 to 380 and 403 to 412; these read TEPQ…NGQP and PRGQTSNSNR.

It localises to the golgi apparatus membrane. It catalyses the reaction S-ubiquitinyl-[E2 ubiquitin-conjugating enzyme]-L-cysteine + [acceptor protein]-L-lysine = [E2 ubiquitin-conjugating enzyme]-L-cysteine + N(6)-ubiquitinyl-[acceptor protein]-L-lysine.. It functions in the pathway protein modification; protein ubiquitination. Its function is as follows. E3 ubiquitin-protein ligase. E3 ubiquitin ligases accept ubiquitin from an E2 ubiquitin-conjugating enzyme in the form of a thioester and then directly transfer the ubiquitin to targeted substrates. This Danio rerio (Zebrafish) protein is E3 ubiquitin-protein ligase MARCHF4 (marchf4).